The primary structure comprises 597 residues: Miltiradiene synthase KSL2, chloroplastic (597 aa).

A chloroplast-targeting transit peptide spans 1 to 51 (MSLAFNLRAIPFSGHTIQSRRGLFPVHESPMITTKPFVAVKCSLTTSTDLM). Mg(2+) is bound by residues Asp329, Asp333, Asn473, and Glu481. The short motif at 329-333 (DDFFD) is the DDXXD motif element.

The protein belongs to the terpene synthase family. The cofactor is Mg(2+).

It localises to the plastid. Its subcellular location is the chloroplast. It carries out the reaction (+)-copalyl diphosphate = miltiradiene + diphosphate. The protein operates within secondary metabolite biosynthesis; terpenoid biosynthesis. Involved in the biosynthesis of ent-kaurene diterpenoids natural products such as oridonin, miltiradiene, eriocalyxin B and nezukol, known to exhibit antitumor, anti-inflammatory and antibacterial activities. Catalyzes the conversion of (+)-copalyl diphosphate ((+)-CPP) to miltiradiene. This chain is Miltiradiene synthase KSL2, chloroplastic, found in Isodon japonicus (Scutellaria japonica).